A 309-amino-acid chain; its full sequence is Lactamase-like protein aptB (309 aa).

4 residues coordinate Zn(2+): H97, H99, D101, and H102. The active-site Proton donor/acceptor is D101.

It belongs to the metallo-beta-lactamase superfamily. Requires Zn(2+) as cofactor.

It catalyses the reaction 2,3,6,8,9-pentahydroxy-1-oxo-3-(2-oxopropyl)-1,2,3,4-tetrahydroanthracene-2-carboxyl-[ACP] + H2O = 2,3,6,8,9-pentahydroxy-1-oxo-3-(2-oxopropyl)-1,2,3,4-tetrahydroanthracene-2-carboxylate + holo-[ACP] + H(+). It participates in secondary metabolite biosynthesis. Functionally, lactamase-like protein; part of the gene cluster that mediates the biosynthesis of asperthecin, an anthraquinone pigment. Polyketide synthase (PKS) aptA catalyzes the formation of the aromatic polyketide from acetyl coenzyme A and seven malonyl coenzyme A molecules. Polyketide is subsequently hydrolyzed by the action of aptB into endocrocin-9-anthrone. Endocrocin-9-anthrone is then oxidized into endocrocin by aptC. Endocrocin is likely to decarboxylate spontaneously to form emodin which explains why there is no decarboxylase in the asperthecin biosynthesis cluster. Finally, aptC or another endogenous oxygenase catalyzes additional oxidation steps to form asperthecin. In Emericella nidulans (strain FGSC A4 / ATCC 38163 / CBS 112.46 / NRRL 194 / M139) (Aspergillus nidulans), this protein is Lactamase-like protein aptB.